A 412-amino-acid chain; its full sequence is Yellow-related salivary protein LJM17 (412 aa).

A signal peptide spans 1–18; that stretch reads MRFFFVFLAIVLFQGIHG. Residue N29 is glycosylated (N-linked (GlcNAc...) asparagine).

Belongs to the major royal jelly protein family. In terms of tissue distribution, salivary gland.

It localises to the secreted. Its function is as follows. Probably modulates blood feeding of sand flies on vertebrate species by binding and sequestering different mediators involved in the host response. Binds biogenic amines. Binds serotonin with high affinity. Binds noradrenaline but not adrenaline. Binds dopamine and octopamine. Binds histamine. Inhibits host smooth muscle contraction induced by histamine in bioassay with guinea pig ileum. Immunogenic; elicits antibody production in the host. Functions as a chemoattractant for host neutrophils; likely acts through a G-protein-coupled receptor and effect is dependent on calcium influx. The sequence is that of Yellow-related salivary protein LJM17 from Lutzomyia longipalpis (Sand fly).